We begin with the raw amino-acid sequence, 437 residues long: Ribosomal protein uS12 methylthiotransferase RimO (437 aa).

Positions 4–114 (PRVSFVSLGC…VMAAVHEAAP (111 aa)) constitute an MTTase N-terminal domain. [4Fe-4S] cluster-binding residues include cysteine 13, cysteine 49, cysteine 78, cysteine 145, cysteine 149, and cysteine 152. Residues 131–369 (LTPRHYAYLK…MQRQQKISAT (239 aa)) form the Radical SAM core domain. The region spanning 372–437 (AKKVGKRLPV…DAYDLYGSAV (66 aa)) is the TRAM domain.

The protein belongs to the methylthiotransferase family. RimO subfamily. [4Fe-4S] cluster serves as cofactor.

It is found in the cytoplasm. The enzyme catalyses L-aspartate(89)-[ribosomal protein uS12]-hydrogen + (sulfur carrier)-SH + AH2 + 2 S-adenosyl-L-methionine = 3-methylsulfanyl-L-aspartate(89)-[ribosomal protein uS12]-hydrogen + (sulfur carrier)-H + 5'-deoxyadenosine + L-methionine + A + S-adenosyl-L-homocysteine + 2 H(+). Its function is as follows. Catalyzes the methylthiolation of an aspartic acid residue of ribosomal protein uS12. The polypeptide is Ribosomal protein uS12 methylthiotransferase RimO (Mesorhizobium japonicum (strain LMG 29417 / CECT 9101 / MAFF 303099) (Mesorhizobium loti (strain MAFF 303099))).